A 478-amino-acid polypeptide reads, in one-letter code: MSRFSGALQLTDLDDFITPSQECIKPVKIETNKSKTGSKITIQDDGSYMQATSSGLQKLEKVEITLADCLACSGCITSAEGVLITQQSQEELLKVMNENNLAKLNNQLDSVRYIVFTVAQQPILSLAKRYNLGPEETFERVAGYFKKLGADMVVDTKIADDLSLIESRNEFVERFNTNRQSMPMMASSCPGWVCYAEKTHGNFILPFIATTRSPQQIMGVLVKKYLAKILGVPGDRIYHVTVMPCYDKKLEASREDFFSDVDNCRDVDCVITSIEIEQMLDGTGIQFLQTVEPSPIDWPWPTPRPSAFVWAHESSGSGGYSEYIFKYAARKLFNINIDQAEFKILRNNDLREAILEINGEVLLRFAIANGFRNIQNMVQKLKRGKCNYHFIEIMACPSGCLNGGAQVRPNSGQTPRELTAELEAMYKMLPQSNPENEAVEMVYTTFLDNAGDNNKRKEFLHTSYHQIEKMNTALNIKW.

Residues Cys-23, Cys-69, Cys-72, Cys-75, Cys-189, Cys-245, Cys-396, and Cys-400 each coordinate [4Fe-4S] cluster.

It belongs to the NARF family.

Functionally, component of the cytosolic iron-sulfur (Fe/S) protein assembly machinery. Required for maturation of extramitochondrial Fe/S proteins. This is Probable cytosolic Fe-S cluster assembly factor AAEL012261 from Aedes aegypti (Yellowfever mosquito).